A 410-amino-acid chain; its full sequence is Peptidase T (410 aa).

The segment at 11–30 (RYAEIDTQSDPDSESTPSTE) is disordered. A Zn(2+)-binding site is contributed by histidine 78. Aspartate 80 is a catalytic residue. Aspartate 140 contacts Zn(2+). Residue glutamate 174 is the Proton acceptor of the active site. Zn(2+) is bound by residues glutamate 175, aspartate 197, and histidine 379.

The protein belongs to the peptidase M20B family. Requires Zn(2+) as cofactor.

It localises to the cytoplasm. The enzyme catalyses Release of the N-terminal residue from a tripeptide.. Cleaves the N-terminal amino acid of tripeptides. This Staphylococcus carnosus (strain TM300) protein is Peptidase T.